Consider the following 298-residue polypeptide: MSPQYHFYFVSFRNLVLNEKCLRSKKQVMKSFNWYKTDRYFDPHNILQHHSRAIEKTRYKLGMQTSSESTDAKSDFLDEPSAYLIEKNVALPKDIFGSYLSYWIYEVTRHKAAVILLVLIVTSILLLVFFYNTEFCVAFEILLFSFCFPGTCMVVIAFSEPIGDREFKVKLLMEIITRKPAVKGKEWRTITYKMNQYLFDHGLWDTPYYFYRDEDCHRYFLSLIKGRTFKKQKESSASNVKDAQSNDETAGTPNEAAESSSFSAGPNFIKLLTKAAEIEQQFQKEYWRQEYPGVDEFF.

Residues 1–111 (MSPQYHFYFV…YWIYEVTRHK (111 aa)) are Cytoplasmic-facing. Residues 112-132 (AAVILLVLIVTSILLLVFFYN) traverse the membrane as a helical segment. Residues 133 to 137 (TEFCV) lie on the Extracellular side of the membrane. The chain crosses the membrane as a helical span at residues 138-158 (AFEILLFSFCFPGTCMVVIAF). At 159 to 298 (SEPIGDREFK…QEYPGVDEFF (140 aa)) the chain is on the cytoplasmic side. Positions 235-262 (SSASNVKDAQSNDETAGTPNEAAESSSF) are disordered. Residues 297–298 (FF) are COPII binding.

It belongs to the DUP/COS family. As to quaternary structure, interacts with PRM8. Binds to COPII coated vesicles.

It localises to the cell membrane. May be involved in endoplasmic reticulum exit trafficking of proteins. This is Pheromone-regulated membrane protein 9 (PRM9) from Saccharomyces cerevisiae (strain ATCC 204508 / S288c) (Baker's yeast).